The sequence spans 461 residues: Asparagine--tRNA ligase (461 aa).

Belongs to the class-II aminoacyl-tRNA synthetase family. In terms of assembly, homodimer.

The protein resides in the cytoplasm. The enzyme catalyses tRNA(Asn) + L-asparagine + ATP = L-asparaginyl-tRNA(Asn) + AMP + diphosphate + H(+). The chain is Asparagine--tRNA ligase from Nitratidesulfovibrio vulgaris (strain ATCC 29579 / DSM 644 / CCUG 34227 / NCIMB 8303 / VKM B-1760 / Hildenborough) (Desulfovibrio vulgaris).